The primary structure comprises 259 residues: Thiazole synthase (259 aa).

Lysine 99 acts as the Schiff-base intermediate with DXP in catalysis. 1-deoxy-D-xylulose 5-phosphate contacts are provided by residues glycine 160, 186-187, and 208-209; these read AG and NT.

This sequence belongs to the ThiG family. As to quaternary structure, homotetramer. Forms heterodimers with either ThiH or ThiS.

The protein localises to the cytoplasm. It catalyses the reaction [ThiS sulfur-carrier protein]-C-terminal-Gly-aminoethanethioate + 2-iminoacetate + 1-deoxy-D-xylulose 5-phosphate = [ThiS sulfur-carrier protein]-C-terminal Gly-Gly + 2-[(2R,5Z)-2-carboxy-4-methylthiazol-5(2H)-ylidene]ethyl phosphate + 2 H2O + H(+). The protein operates within cofactor biosynthesis; thiamine diphosphate biosynthesis. Catalyzes the rearrangement of 1-deoxy-D-xylulose 5-phosphate (DXP) to produce the thiazole phosphate moiety of thiamine. Sulfur is provided by the thiocarboxylate moiety of the carrier protein ThiS. In vitro, sulfur can be provided by H(2)S. The chain is Thiazole synthase from Porphyromonas gingivalis (strain ATCC BAA-308 / W83).